The primary structure comprises 412 residues: Divalent metal cation transporter MntH (412 aa).

The Cytoplasmic portion of the chain corresponds to Met1–Leu19. A helical membrane pass occupies residues Ala20–Ala39. Topologically, residues Thr40–Gln51 are periplasmic. A helical membrane pass occupies residues Leu52 to Ala71. The Cytoplasmic segment spans residues Lys72 to Trp95. Residues Phe96–Ile118 form a helical membrane-spanning segment. The Periplasmic segment spans residues Gly119 to Gly125. A helical transmembrane segment spans residues Val126–Leu145. At Gln146 to Lys155 the chain is on the cytoplasmic side. A helical membrane pass occupies residues Val156–Ser175. Residues Gln176–Ala196 are Periplasmic-facing. A helical membrane pass occupies residues Val197–Thr220. Residues Gln221–Asp238 are Cytoplasmic-facing. A helical membrane pass occupies residues Val239–Ala258. Over Ala259–Tyr276 the chain is Periplasmic. A helical transmembrane segment spans residues Leu277 to Ala297. Residues Ala298–Arg327 lie on the Cytoplasmic side of the membrane. A helical transmembrane segment spans residues Arg328–Asp344. The Periplasmic portion of the chain corresponds to Pro345–Val350. A helical transmembrane segment spans residues Met351–Phe370. The Cytoplasmic portion of the chain corresponds to Thr371–Lys387. The chain crosses the membrane as a helical span at residues Gln388–Val406. Over Gly407–Leu412 the chain is Periplasmic.

The protein belongs to the NRAMP family.

It is found in the cell inner membrane. Functionally, h(+)-stimulated, divalent metal cation uptake system. In Escherichia fergusonii (strain ATCC 35469 / DSM 13698 / CCUG 18766 / IAM 14443 / JCM 21226 / LMG 7866 / NBRC 102419 / NCTC 12128 / CDC 0568-73), this protein is Divalent metal cation transporter MntH.